The following is a 387-amino-acid chain: Proline-rich protein 5 (387 aa).

Interaction with RICTOR stretches follow at residues 10-96 (MSSP…LTKG) and 189-219 (HESRGVTEDYLRLETLIQKVVSPYLGTYGLY). Residues 11 to 33 (SSPSLSDLGKREPGAAGADERGT) are disordered. Over residues 18–33 (LGKREPGAAGADERGT) the composition is skewed to basic and acidic residues. Ser-253 carries the post-translational modification Phosphoserine. 2 disordered regions span residues 262–347 (NPVA…PETL) and 365–387 (DFGRGSRSSVSDFEAAGGRPSVV). Residues 310–321 (SSPSPHSGPCPS) show a composition bias toward low complexity. The residue at position 373 (Ser-373) is a Phosphoserine.

Belongs to the PROTOR family. In terms of assembly, associated component of the mechanistic target of rapamycin complex 2 (mTORC2). Binds directly to MTOR and RICTOR within the TORC2 complex.

In terms of biological role, associated subunit of mTORC2, which regulates cell growth and survival in response to hormonal signals. mTORC2 is activated by growth factors, but, in contrast to mTORC1, seems to be nutrient-insensitive. mTORC2 seems to function upstream of Rho GTPases to regulate the actin cytoskeleton, probably by activating one or more Rho-type guanine nucleotide exchange factors. PRR5 plays an important role in regulation of PDGFRB expression and in modulation of platelet-derived growth factor signaling. May act as a tumor suppressor in breast cancer. In Rattus norvegicus (Rat), this protein is Proline-rich protein 5.